The following is a 162-amino-acid chain: Protein-export protein SecB (162 aa).

The protein belongs to the SecB family. In terms of assembly, homotetramer, a dimer of dimers. One homotetramer interacts with 1 SecA dimer.

The protein localises to the cytoplasm. One of the proteins required for the normal export of preproteins out of the cell cytoplasm. It is a molecular chaperone that binds to a subset of precursor proteins, maintaining them in a translocation-competent state. It also specifically binds to its receptor SecA. This Pseudomonas syringae pv. syringae (strain B728a) protein is Protein-export protein SecB.